Here is a 71-residue protein sequence, read N- to C-terminus: Large ribosomal subunit protein uL29 (71 aa).

This sequence belongs to the universal ribosomal protein uL29 family.

The chain is Large ribosomal subunit protein uL29 from Rickettsia africae (strain ESF-5).